The chain runs to 1095 residues: MPAMRGLLAPQNTFLDTIATRFDGTHSNFVLGNAQVAGLFPVVYCSDGFCDLTGFSRAEVMQRGCACSFLYGPDTSELVRQQIRKALDEHKEFKAELILYRKSGLPFWCLLDVIPIKNEKGEVALFLVSHKDISETKNRGGPDNWKERGGGRRRYGRAGSKGFNANRRRSRAVLYHLSGHLQKQPKGKHKLNKGVFGEKPNLPEYKVAAIRKSPFILLHCGALRATWDGFILLATLYVAVTVPYSVCVSTAREPSAARGPPSVCDLAVEVLFILDIVLNFRTTFVSKSGQVVFAPKSICLHYVTTWFLLDVIAALPFDLLHAFKVNVYVGAHLLKTVRLLRLLRLLPRLDRYSQYSAVVLTLLMAVFALLAHWVACVWFYIGQQEIESSESELPEIGWLQELARRLETPYYLVSRSPDGGNSSGQSENCSSSSSSSGSGGGRGSEANGTGLELLGGPSLRSAYITSLYFALSSLTSVGFGNVSANTDTEKIFSICTMLIGALMHAVVFGNVTAIIQRMYARRFLYHSRTRDLRDYIRIHRIPKPLKQRMLEYFQATWAVNNGIDTTELLQSLPDELRADIAMHLHKEVLQLPLFEAASRGCLRALSLALRPAFCTPGEYLIHQGDALQALYFVCSGSMEVLKGGTVLAILGKGDLIGCELPQREQVVKANADVKGLTYCVLQCLQLAGLHESLALYPEFAPRFSRGLRGELSYNLGAGGVSAEVDTSSLSGDNTLMSTLEEKETDGEQGHTVSPAPADEPSSPLLSPGCTSSSSAAKLLSPRRTAPRPRLGGRGRPSRAGVLKPEAGPSAHPRSLDGLQLPPMPWNVPPDLSPRVVDGIEDGCSSDQPKFSFRVGQSGPECSSSPSPGTESGLLTVPLGPSEARNTDTLDKLRQAVMELSEQVLQMREGLQSLRQAVQLILVPQGEGQCPRGSGEEPCPATASGLLQPLRVDTGASSYCLQPPAGSVLSGTWPHPRPGQPPPLMAPWPWGPPASQSSPWPRATALWTSTSDSEPPGSGDLCSEPSTPASPPPSEEGARTGTPAPVSQAEATSTGEPPPGPGGRALPWDPHSLEMVLIGCHGPGTVQWTQEEGTGV.

The Cytoplasmic segment spans residues 1-228 (MPAMRGLLAP…HCGALRATWD (228 aa)). The PAS domain maps to 18–90 (IATRFDGTHS…QQIRKALDEH (73 aa)). Positions 93 to 145 (FKAELILYRKSGLPFWCLLDVIPIKNEKGEVALFLVSHKDISETKNRGGPDNW) constitute a PAC domain. Residues 137–150 (KNRGGPDNWKERGG) are compositionally biased toward basic and acidic residues. A disordered region spans residues 137-161 (KNRGGPDNWKERGGGRRRYGRAGSK). Residues 229-249 (GFILLATLYVAVTVPYSVCVS) form a helical membrane-spanning segment. Residues 250–259 (TAREPSAARG) lie on the Extracellular side of the membrane. Residues 260 to 280 (PPSVCDLAVEVLFILDIVLNF) form a helical membrane-spanning segment. The Cytoplasmic portion of the chain corresponds to 281 to 302 (RTTFVSKSGQVVFAPKSICLHY). A helical transmembrane segment spans residues 303 to 323 (VTTWFLLDVIAALPFDLLHAF). The Extracellular segment spans residues 324–331 (KVNVYVGA). The chain crosses the membrane as a helical; Voltage-sensor span at residues 332 to 352 (HLLKTVRLLRLLRLLPRLDRY). The Cytoplasmic portion of the chain corresponds to 353-361 (SQYSAVVLT). Residues 362–382 (LLMAVFALLAHWVACVWFYIG) form a helical membrane-spanning segment. Topologically, residues 383-464 (QQEIESSESE…GGPSLRSAYI (82 aa)) are extracellular. Residues 417-447 (PDGGNSSGQSENCSSSSSSSGSGGGRGSEAN) form a disordered region. The segment covering 419-436 (GGNSSGQSENCSSSSSSS) has biased composition (low complexity). Asn421, Asn428, and Asn447 each carry an N-linked (GlcNAc...) asparagine glycan. The segment at residues 465-485 (TSLYFALSSLTSVGFGNVSAN) is an intramembrane region (pore-forming). A Selectivity filter motif is present at residues 476 to 481 (SVGFGN). The Extracellular portion of the chain corresponds to 486–490 (TDTEK). Residues 491-511 (IFSICTMLIGALMHAVVFGNV) traverse the membrane as a helical segment. The Cytoplasmic portion of the chain corresponds to 512-1095 (TAIIQRMYAR…QWTQEEGTGV (584 aa)). 593–708 (LFEAASRGCL…FAPRFSRGLR (116 aa)) is an a nucleoside 3',5'-cyclic phosphate binding site. Disordered regions lie at residues 740–823 (EEKE…LPPM), 854–883 (VGQS…PSEA), and 965–1069 (GSVL…PWDP). Positions 784–796 (TAPRPRLGGRGRP) are enriched in basic residues. Residues 857–872 (SGPECSSSPSPGTESG) show a composition bias toward low complexity. Residues 974-991 (HPRPGQPPPLMAPWPWGP) show a composition bias toward pro residues.

This sequence belongs to the potassium channel family. H (Eag) (TC 1.A.1.20) subfamily. Kv12.2/KCNH3 sub-subfamily. As to quaternary structure, the potassium channel is probably composed of a homo- or heterotetrameric complex of pore-forming alpha subunits that can associate with modulating beta subunits. Interacts with KCNE1 and KCNE3; these interactions regulate KCNH3 trafficking to the plasma membrane and its subsequent voltage-gated potassium channel activity. In terms of processing, N-glycosylated. N-glycosylation mediates traffick to the cell membrane but is not necessary for voltage-gated potassium channel activity. As to expression, detected in brain, but not in other tissues.

The protein resides in the cell membrane. The catalysed reaction is K(+)(in) = K(+)(out). In terms of biological role, pore-forming (alpha) subunit of a voltage-gated inwardly rectifying potassium channel. Charactherized by a fast rate of activation during depolarization followed by a rapid inactivation at much more depolarized value causing inward rectification due to a C-type inactivation mechanism. Exhibits a rapid recovery from inactivation. In Mus musculus (Mouse), this protein is Voltage-gated inwardly rectifying potassium channel KCNH3.